The primary structure comprises 285 residues: Glutamate racemase (285 aa).

Residues Asp-30–Ser-31 and Tyr-62–Gly-63 contribute to the substrate site. Cys-94 serves as the catalytic Proton donor/acceptor. Residue Asn-95 to Thr-96 coordinates substrate. The active-site Proton donor/acceptor is the Cys-206. Substrate is bound at residue Thr-207 to His-208.

Belongs to the aspartate/glutamate racemases family.

It carries out the reaction L-glutamate = D-glutamate. Its pathway is cell wall biogenesis; peptidoglycan biosynthesis. In terms of biological role, provides the (R)-glutamate required for cell wall biosynthesis. This is Glutamate racemase from Pectobacterium atrosepticum (strain SCRI 1043 / ATCC BAA-672) (Erwinia carotovora subsp. atroseptica).